Consider the following 69-residue polypeptide: Cytochrome c oxidase subunit 8A, mitochondrial (69 aa).

A mitochondrion-targeting transit peptide spans 1 to 25 (MSVLTPLLLRGLTGSARRLPMPCAR). The SIFI-degron motif lies at 2 to 19 (SVLTPLLLRGLTGSARRL). The Mitochondrial matrix segment spans residues 26-36 (VHSKPPREQLG). A helical membrane pass occupies residues 37-60 (TMDIAIGLTSCFVCFLLPSGWVLS). Residues 61-69 (HLENYKKRE) are Mitochondrial intermembrane-facing.

Belongs to the cytochrome c oxidase VIII family. In terms of assembly, component of the cytochrome c oxidase (complex IV, CIV), a multisubunit enzyme composed of 14 subunits. The complex is composed of a catalytic core of 3 subunits MT-CO1, MT-CO2 and MT-CO3, encoded in the mitochondrial DNA, and 11 supernumerary subunits COX4I, COX5A, COX5B, COX6A, COX6B, COX6C, COX7A, COX7B, COX7C, COX8 and NDUFA4, which are encoded in the nuclear genome. The complex exists as a monomer or a dimer and forms supercomplexes (SCs) in the inner mitochondrial membrane with NADH-ubiquinone oxidoreductase (complex I, CI) and ubiquinol-cytochrome c oxidoreductase (cytochrome b-c1 complex, complex III, CIII), resulting in different assemblies (supercomplex SCI(1)III(2)IV(1) and megacomplex MCI(2)III(2)IV(2)). Post-translationally, in response to mitochondrial stress, the precursor protein is ubiquitinated by the SIFI complex in the cytoplasm before mitochondrial import, leading to its degradation. Within the SIFI complex, UBR4 initiates ubiquitin chain that are further elongated or branched by KCMF1.

It is found in the mitochondrion inner membrane. The protein operates within energy metabolism; oxidative phosphorylation. Functionally, component of the cytochrome c oxidase, the last enzyme in the mitochondrial electron transport chain which drives oxidative phosphorylation. The respiratory chain contains 3 multisubunit complexes succinate dehydrogenase (complex II, CII), ubiquinol-cytochrome c oxidoreductase (cytochrome b-c1 complex, complex III, CIII) and cytochrome c oxidase (complex IV, CIV), that cooperate to transfer electrons derived from NADH and succinate to molecular oxygen, creating an electrochemical gradient over the inner membrane that drives transmembrane transport and the ATP synthase. Cytochrome c oxidase is the component of the respiratory chain that catalyzes the reduction of oxygen to water. Electrons originating from reduced cytochrome c in the intermembrane space (IMS) are transferred via the dinuclear copper A center (CU(A)) of subunit 2 and heme A of subunit 1 to the active site in subunit 1, a binuclear center (BNC) formed by heme A3 and copper B (CU(B)). The BNC reduces molecular oxygen to 2 water molecules using 4 electrons from cytochrome c in the IMS and 4 protons from the mitochondrial matrix. The chain is Cytochrome c oxidase subunit 8A, mitochondrial (COX8A) from Nycticebus coucang (Slow loris).